A 106-amino-acid chain; its full sequence is uncharacterized protein (106 aa).

Residues 1–23 (MASGAPPLTQKTPSHARRKERRR) form a disordered region. Basic residues predominate over residues 14–23 (SHARRKERRR).

This is an uncharacterized protein from Treponema pallidum (strain Nichols).